Reading from the N-terminus, the 414-residue chain is Serine/threonine transporter SstT (414 aa).

8 helical membrane passes run 22 to 42, 54 to 74, 89 to 109, 148 to 168, 189 to 209, 223 to 243, 305 to 325, and 337 to 357; these read GLVL…TIGF, IFVK…VMAA, IIVL…IAGF, AIFK…GLAL, IVHV…AETL, LLAV…PILV, MAGA…TLGL, and IVAA…LLLI.

Belongs to the dicarboxylate/amino acid:cation symporter (DAACS) (TC 2.A.23) family.

The protein localises to the cell inner membrane. It catalyses the reaction L-serine(in) + Na(+)(in) = L-serine(out) + Na(+)(out). The catalysed reaction is L-threonine(in) + Na(+)(in) = L-threonine(out) + Na(+)(out). In terms of biological role, involved in the import of serine and threonine into the cell, with the concomitant import of sodium (symport system). The sequence is that of Serine/threonine transporter SstT from Haemophilus influenzae (strain PittGG).